The chain runs to 156 residues: CRIB domain-containing protein RIC11 (156 aa).

The CRIB domain maps to 26–39 (IGHPTEVKHVAHIG). A disordered region spans residues 87–156 (QDQLNISDRI…SMVSRLNSNA (70 aa)). Residues 109–120 (IHTKSKNRRKKP) show a composition bias toward basic residues. Over residues 121–142 (SSTSSPRSRPSPKSSRSMGLSK) the composition is skewed to low complexity.

In terms of biological role, functions as a downstream effector of Rho-related GTP binding proteins of the 'Rho of Plants' (ROPs) family. Participates in the propagation of ROP GTPase signals in specific cellular responses. The protein is CRIB domain-containing protein RIC11 (RIC11) of Arabidopsis thaliana (Mouse-ear cress).